The chain runs to 275 residues: 2,3,4,5-tetrahydropyridine-2,6-dicarboxylate N-succinyltransferase (275 aa).

Residues R108 and D145 each coordinate substrate.

It belongs to the transferase hexapeptide repeat family. Homotrimer.

It is found in the cytoplasm. It carries out the reaction (S)-2,3,4,5-tetrahydrodipicolinate + succinyl-CoA + H2O = (S)-2-succinylamino-6-oxoheptanedioate + CoA. It functions in the pathway amino-acid biosynthesis; L-lysine biosynthesis via DAP pathway; LL-2,6-diaminopimelate from (S)-tetrahydrodipicolinate (succinylase route): step 1/3. This chain is 2,3,4,5-tetrahydropyridine-2,6-dicarboxylate N-succinyltransferase, found in Maricaulis maris (strain MCS10) (Caulobacter maris).